We begin with the raw amino-acid sequence, 432 residues long: Glutamate-1-semialdehyde 2,1-aminomutase 2 (432 aa).

Lys-268 carries the post-translational modification N6-(pyridoxal phosphate)lysine.

It belongs to the class-III pyridoxal-phosphate-dependent aminotransferase family. HemL subfamily. Homodimer. Pyridoxal 5'-phosphate serves as cofactor.

It is found in the cytoplasm. It carries out the reaction (S)-4-amino-5-oxopentanoate = 5-aminolevulinate. It participates in porphyrin-containing compound metabolism; protoporphyrin-IX biosynthesis; 5-aminolevulinate from L-glutamyl-tRNA(Glu): step 2/2. This chain is Glutamate-1-semialdehyde 2,1-aminomutase 2, found in Listeria welshimeri serovar 6b (strain ATCC 35897 / DSM 20650 / CCUG 15529 / CIP 8149 / NCTC 11857 / SLCC 5334 / V8).